The chain runs to 258 residues: Indole-3-glycerol phosphate synthase (258 aa).

It belongs to the TrpC family.

The catalysed reaction is 1-(2-carboxyphenylamino)-1-deoxy-D-ribulose 5-phosphate + H(+) = (1S,2R)-1-C-(indol-3-yl)glycerol 3-phosphate + CO2 + H2O. Its pathway is amino-acid biosynthesis; L-tryptophan biosynthesis; L-tryptophan from chorismate: step 4/5. This Chlorobium phaeovibrioides (strain DSM 265 / 1930) (Prosthecochloris vibrioformis (strain DSM 265)) protein is Indole-3-glycerol phosphate synthase.